The chain runs to 446 residues: Serine--tRNA ligase, mitochondrial (446 aa).

An L-serine-binding site is contributed by 251-253 (TAE). Residues 284–286 (RAE) and V300 each bind ATP. Position 307 (E307) interacts with L-serine. Residue 371-374 (EISS) participates in ATP binding. An L-serine-binding site is contributed by T407.

This sequence belongs to the class-II aminoacyl-tRNA synthetase family. Type-1 seryl-tRNA synthetase subfamily. As to quaternary structure, homodimer. The tRNA molecule binds across the dimer.

The protein localises to the mitochondrion matrix. It catalyses the reaction tRNA(Ser) + L-serine + ATP = L-seryl-tRNA(Ser) + AMP + diphosphate + H(+). Catalyzes the attachment of serine to tRNA(Ser). The sequence is that of Serine--tRNA ligase, mitochondrial (DIA4) from Saccharomyces cerevisiae (strain ATCC 204508 / S288c) (Baker's yeast).